A 279-amino-acid chain; its full sequence is uncharacterized protein (279 aa).

Positions 14–71 (ITPNQIKLLIALHKTKSQNEAAKLLNIKPSSFNIQLKRLENKLGVKLYYSSPNGTVLT) constitute an HTH lysR-type domain. The H-T-H motif DNA-binding region spans 31–50 (QNEAAKLLNIKPSSFNIQLK).

It belongs to the LysR transcriptional regulatory family.

This is an uncharacterized protein from Methanocaldococcus jannaschii (strain ATCC 43067 / DSM 2661 / JAL-1 / JCM 10045 / NBRC 100440) (Methanococcus jannaschii).